The primary structure comprises 175 residues: Nicotinamide-nucleotide adenylyltransferase 1 (175 aa).

The protein belongs to the archaeal NMN adenylyltransferase family.

It is found in the cytoplasm. The catalysed reaction is beta-nicotinamide D-ribonucleotide + ATP + H(+) = diphosphate + NAD(+). It participates in cofactor biosynthesis; NAD(+) biosynthesis; NAD(+) from nicotinamide D-ribonucleotide: step 1/1. In Sulfolobus acidocaldarius (strain ATCC 33909 / DSM 639 / JCM 8929 / NBRC 15157 / NCIMB 11770), this protein is Nicotinamide-nucleotide adenylyltransferase 1.